A 151-amino-acid chain; its full sequence is SsrA-binding protein (151 aa).

The protein belongs to the SmpB family.

The protein localises to the cytoplasm. In terms of biological role, required for rescue of stalled ribosomes mediated by trans-translation. Binds to transfer-messenger RNA (tmRNA), required for stable association of tmRNA with ribosomes. tmRNA and SmpB together mimic tRNA shape, replacing the anticodon stem-loop with SmpB. tmRNA is encoded by the ssrA gene; the 2 termini fold to resemble tRNA(Ala) and it encodes a 'tag peptide', a short internal open reading frame. During trans-translation Ala-aminoacylated tmRNA acts like a tRNA, entering the A-site of stalled ribosomes, displacing the stalled mRNA. The ribosome then switches to translate the ORF on the tmRNA; the nascent peptide is terminated with the 'tag peptide' encoded by the tmRNA and targeted for degradation. The ribosome is freed to recommence translation, which seems to be the essential function of trans-translation. The sequence is that of SsrA-binding protein from Wolinella succinogenes (strain ATCC 29543 / DSM 1740 / CCUG 13145 / JCM 31913 / LMG 7466 / NCTC 11488 / FDC 602W) (Vibrio succinogenes).